An 85-amino-acid chain; its full sequence is U4-theraphotoxin-Hhn1a (85 aa).

Residues 1 to 22 (MKVTLIAILTCAAVLVLHTTAA) form the signal peptide. A propeptide spanning residues 23–48 (EEFEAESQLMEVGMPDTELAAVDEER) is cleaved from the precursor. Disulfide bonds link C52/C66, C56/C77, and C71/C82.

The protein belongs to the neurotoxin 12 (Hwtx-2) family. 02 (Hwtx-2) subfamily. In terms of assembly, monomer. Expressed by the venom gland.

The protein localises to the secreted. Functionally, neurotoxin active on both insects and mammals. The sequence is that of U4-theraphotoxin-Hhn1a from Cyriopagopus hainanus (Chinese bird spider).